We begin with the raw amino-acid sequence, 687 residues long: Epithelial splicing regulatory protein 1 (687 aa).

RRM domains follow at residues 226–303 (TIIR…KATG), 327–407 (VIVR…RSTA), and 446–526 (DCIR…QCSA).

It belongs to the ESRP family.

It is found in the nucleus. MRNA splicing factor that regulates the formation of epithelial cell-specific isoforms. Specifically regulates the expression of FGFR2-IIIb, an epithelial cell-specific isoform of fgfr2. Acts by directly binding specific sequences in mRNAs. Binds the GU-rich sequence motifs in the ISE/ISS-3, a cis-element regulatory region present in the mRNA of fgfr2. The chain is Epithelial splicing regulatory protein 1 (esrp1) from Xenopus tropicalis (Western clawed frog).